A 271-amino-acid chain; its full sequence is Putative cysteine protease YopT-like blr2140 (271 aa).

Residues 1 to 81 (MYDRIGGSST…STSSPESPAT (81 aa)) are disordered. A compositionally biased stretch (polar residues) spans 7–29 (GSSTRTSQTDEPSQSVDSGSFTE). Low complexity predominate over residues 65–81 (TSSASEPSTSSPESPAT). Residue Cys-100 is part of the active site. Positions 114 to 136 (SPSTRMSALTPGSQTHASAAERQ) are disordered. Catalysis depends on residues His-213 and Asp-228.

Belongs to the peptidase C58 family.

Its function is as follows. Potential cysteine protease, which may play a central role after invasion of host cell. The polypeptide is Putative cysteine protease YopT-like blr2140 (Bradyrhizobium diazoefficiens (strain JCM 10833 / BCRC 13528 / IAM 13628 / NBRC 14792 / USDA 110)).